We begin with the raw amino-acid sequence, 565 residues long: Anaphase-promoting complex subunit 7 (565 aa).

TPR repeat units lie at residues 101–134, 169–202, 203–236, 237–270, 339–372, 373–406, 407–439, 442–474, 475–508, and 509–531; these read EIEVKYKMAECYTMLKLDKDAIAVLDGIPSRQRT, LDAILGLLSLSVKGAEVASMTMNVIQTVPNLDWL, SVWIKAYAFVHTGDNSRAINTICSLEKKSLLRDN, VDLLGSLADLYFRAGDSKNSVLKFEQAQMLDPYL, VQALLLKGAALRNMGRVQEAIIHFREAIRLAPCR, LDCYEGLIECYLASNSIREAMVMANNVYKTLGAN, AQTLTLLATVCLEDPVTQEKAKTLLDKALAQRP, VKAVVKKAELLSREQKYEDGIALLRNALANQSD, CVLHRILGDFLVAVNEYQEAMDQYSIALSLDPND, and QKSLEGMQKMEKEESPTDATQEE. At lysine 229 the chain carries N6-acetyllysine. The segment covering 513–523 has biased composition (basic and acidic residues); sequence EGMQKMEKEES. A disordered region spans residues 513–565; it reads EGMQKMEKEESPTDATQEEDVDDMEGSGEEGDLEGSDSEAAQWADQEQWFGMQ. Residues 528–549 are compositionally biased toward acidic residues; it reads TQEEDVDDMEGSGEEGDLEGSD.

Belongs to the APC7 family. In terms of assembly, V-shaped homodimer. The mammalian APC/C is composed at least of 14 distinct subunits ANAPC1, ANAPC2, CDC27/APC3, ANAPC4, ANAPC5, CDC16/APC6, ANAPC7, CDC23/APC8, ANAPC10, ANAPC11, CDC26/APC12, ANAPC13, ANAPC15 and ANAPC16 that assemble into a complex of at least 19 chains with a combined molecular mass of around 1.2 MDa; APC/C interacts with FZR1 and FBXO5.

It is found in the cytoplasm. The protein resides in the cytoskeleton. Its subcellular location is the nucleus. It localises to the spindle. It functions in the pathway protein modification; protein ubiquitination. In terms of biological role, component of the anaphase promoting complex/cyclosome (APC/C), a cell cycle-regulated E3 ubiquitin ligase that controls progression through mitosis and the G1 phase of the cell cycle. The APC/C complex acts by mediating ubiquitination and subsequent degradation of target proteins: it mainly mediates the formation of 'Lys-11'-linked polyubiquitin chains and, to a lower extent, the formation of 'Lys-48'- and 'Lys-63'-linked polyubiquitin chains. The APC/C complex catalyzes assembly of branched 'Lys-11'-/'Lys-48'-linked branched ubiquitin chains on target proteins. APC7 is not required for the assembly of the APC/C complex, but has an enzyme-substrate adapter activity mediating the processive ubiquitination of specific substrates. Involved in brain development through the specific ubiquitination and clearance of MKI67 from constitutive heterochromatin after neuronal progenitors exit mitosis. The chain is Anaphase-promoting complex subunit 7 (Anapc7) from Mus musculus (Mouse).